Here is a 321-residue protein sequence, read N- to C-terminus: Chitinase-like protein 1 (321 aa).

An N-terminal signal peptide occupies residues 1–26 (MVTIRSGSIVILVLLAVSFLALVANG). A disulfide bond links Cys-42 and Cys-55. Residue Asn-57 is glycosylated (N-linked (GlcNAc...) asparagine). A disulfide bridge connects residues Cys-157 and Cys-167. Asn-208 and Asn-244 each carry an N-linked (GlcNAc...) asparagine glycan. Cys-267 and Cys-304 form a disulfide bridge. Residues 297–321 (GPNDELSCAEQKPFNPSTVPSSSSS) are disordered. Over residues 310-321 (FNPSTVPSSSSS) the composition is skewed to polar residues.

Belongs to the glycosyl hydrolase 19 family. Mostly expressed in seedlings shoots and roots, stems, and flowers, and, to a lower extent, in flowers, mature leaves and roots.

The protein resides in the secreted. No chitinase activity. Essential for normal plant growth and development. Regulates cell expansion extent and differentiation at least in roots and hypocotyls. Prevents lignin accumulation in the pith. May modulate ethylene-mediated regulation during development. Probably required to establish thermotolerance acclimation. Plays a role for controlled anisotropic cell expansion in the regulation of waving during root gravitropism and thigmotropism. Involved in the root system architecture adaptation to multiple environmental conditions such as nitrate. Contributes to salt tolerance and possibly to drought by preventing the overaccumulation of sodium ions. The chain is Chitinase-like protein 1 (CTL1) from Arabidopsis thaliana (Mouse-ear cress).